The chain runs to 205 residues: dITP/XTP pyrophosphatase (205 aa).

Position 7–12 (7–12) interacts with substrate; sequence SNNRGK. 2 residues coordinate Mg(2+): E39 and D68. The active-site Proton acceptor is D68. Residues A69, 154 to 157, K177, and 182 to 183 each bind substrate; these read FGFD and HR.

Belongs to the HAM1 NTPase family. In terms of assembly, homodimer. The cofactor is Mg(2+).

It carries out the reaction XTP + H2O = XMP + diphosphate + H(+). It catalyses the reaction dITP + H2O = dIMP + diphosphate + H(+). The catalysed reaction is ITP + H2O = IMP + diphosphate + H(+). Its function is as follows. Pyrophosphatase that catalyzes the hydrolysis of nucleoside triphosphates to their monophosphate derivatives, with a high preference for the non-canonical purine nucleotides XTP (xanthosine triphosphate), dITP (deoxyinosine triphosphate) and ITP. Seems to function as a house-cleaning enzyme that removes non-canonical purine nucleotides from the nucleotide pool, thus preventing their incorporation into DNA/RNA and avoiding chromosomal lesions. The sequence is that of dITP/XTP pyrophosphatase from Acidovorax ebreus (strain TPSY) (Diaphorobacter sp. (strain TPSY)).